The following is a 384-amino-acid chain: Spermidine/putrescine import ATP-binding protein PotA (384 aa).

The ABC transporter domain occupies 6-238; the sequence is ITFNNVSKTF…PINHFVANFI (233 aa). 40-47 contacts ATP; it reads GASGSGKS.

The protein belongs to the ABC transporter superfamily. Spermidine/putrescine importer (TC 3.A.1.11.1) family. As to quaternary structure, the complex is composed of two ATP-binding proteins (PotA), two transmembrane proteins (PotB and PotC) and a solute-binding protein (PotD).

The protein localises to the cell membrane. The catalysed reaction is ATP + H2O + polyamine-[polyamine-binding protein]Side 1 = ADP + phosphate + polyamineSide 2 + [polyamine-binding protein]Side 1.. Functionally, part of the ABC transporter complex PotABCD involved in spermidine/putrescine import. Responsible for energy coupling to the transport system. This Streptococcus pyogenes serotype M6 (strain ATCC BAA-946 / MGAS10394) protein is Spermidine/putrescine import ATP-binding protein PotA.